The primary structure comprises 463 residues: Endoglucanase EG-1 (463 aa).

Positions 1–22 (MAPSATLPLTTAILAIGRLVAA) are cleaved as a signal peptide. Residues 23 to 397 (QQPGTSTPEV…DIGSTTNSTG (375 aa)) form a catalytic region. N78, N164, N204, and N208 each carry an N-linked (GlcNAc...) asparagine glycan. The active-site Nucleophile is E218. Residue E223 is the Proton donor of the active site. Residues 390 to 429 (GSTTNSTGGNPPPPPPPASSTTFSTTRRSSTTSSSPSCTQ) are disordered. N394 carries an N-linked (GlcNAc...) asparagine glycan. The segment at 402–427 (PPPPPASSTTFSTTRRSSTTSSSPSC) is linker. The span at 408-429 (SSTTFSTTRRSSTTSSSPSCTQ) shows a compositional bias: low complexity. One can recognise a CBM1 domain in the interval 427-463 (CTQTHWGQCGGIGYTGCKTCTSGTTCQYGNDYYSQCL). 2 disulfides stabilise this stretch: C435–C452 and C446–C462.

It belongs to the glycosyl hydrolase 7 (cellulase C) family.

It localises to the secreted. It catalyses the reaction Endohydrolysis of (1-&gt;4)-beta-D-glucosidic linkages in cellulose, lichenin and cereal beta-D-glucans.. Its function is as follows. The biological conversion of cellulose to glucose generally requires three types of hydrolytic enzymes: (1) Endoglucanases which cut internal beta-1,4-glucosidic bonds; (2) Exocellobiohydrolases that cut the disaccharide cellobiose from the non-reducing end of the cellulose polymer chain; (3) Beta-1,4-glucosidases which hydrolyze the cellobiose and other short cello-oligosaccharides to glucose. The sequence is that of Endoglucanase EG-1 (egl1) from Trichoderma longibrachiatum.